The chain runs to 496 residues: Pup--protein ligase (496 aa).

Mg(2+) is bound at residue E30. R73 contacts ATP. A Mg(2+)-binding site is contributed by Y75. D77 functions as the Proton acceptor in the catalytic mechanism. Residue E83 participates in Mg(2+) binding. Positions 86 and 450 each coordinate ATP.

The protein belongs to the Pup ligase/Pup deamidase family. Pup-conjugating enzyme subfamily.

It catalyses the reaction ATP + [prokaryotic ubiquitin-like protein]-L-glutamate + [protein]-L-lysine = ADP + phosphate + N(6)-([prokaryotic ubiquitin-like protein]-gamma-L-glutamyl)-[protein]-L-lysine.. Its pathway is protein degradation; proteasomal Pup-dependent pathway. It participates in protein modification; protein pupylation. Catalyzes the covalent attachment of the prokaryotic ubiquitin-like protein modifier Pup to the proteasomal substrate proteins, thereby targeting them for proteasomal degradation. This tagging system is termed pupylation. The ligation reaction involves the side-chain carboxylate of the C-terminal glutamate of Pup and the side-chain amino group of a substrate lysine. This chain is Pup--protein ligase, found in Bifidobacterium animalis subsp. lactis (strain AD011).